The primary structure comprises 155 residues: Aspartate 1-decarboxylase (155 aa).

The active-site Schiff-base intermediate with substrate; via pyruvic acid is S24. Residue S24 is modified to Pyruvic acid (Ser). T56 contacts substrate. Y57 serves as the catalytic Proton donor. Position 72-74 (72-74 (GAA)) interacts with substrate.

It belongs to the PanD family. In terms of assembly, heterooctamer of four alpha and four beta subunits. It depends on pyruvate as a cofactor. In terms of processing, is synthesized initially as an inactive proenzyme, which is activated by self-cleavage at a specific serine bond to produce a beta-subunit with a hydroxyl group at its C-terminus and an alpha-subunit with a pyruvoyl group at its N-terminus.

Its subcellular location is the cytoplasm. It carries out the reaction L-aspartate + H(+) = beta-alanine + CO2. It functions in the pathway cofactor biosynthesis; (R)-pantothenate biosynthesis; beta-alanine from L-aspartate: step 1/1. Catalyzes the pyruvoyl-dependent decarboxylation of aspartate to produce beta-alanine. The protein is Aspartate 1-decarboxylase of Methylocella silvestris (strain DSM 15510 / CIP 108128 / LMG 27833 / NCIMB 13906 / BL2).